A 283-amino-acid chain; its full sequence is Splicing factor U2af small subunit B (283 aa).

The C3H1-type 1 zinc-finger motif lies at Glu-12–Pro-40. The RRM domain occupies Pro-44–Val-146. The C3H1-type 2 zinc finger occupies Asp-148 to Gln-175. Residues Ser-191–Glu-210 are compositionally biased toward basic residues. Positions Ser-191–Val-283 are disordered. The span at His-211 to Gly-245 shows a compositional bias: basic and acidic residues. The span at Arg-246–Arg-259 shows a compositional bias: basic residues. A compositionally biased stretch (basic and acidic residues) spans Asn-260 to Val-283.

Belongs to the splicing factor SR family. As to quaternary structure, component of the spliceosome. Homo- and heterodimer. Interacts with RNU1, U2AF35A and SR45.

It is found in the nucleus speckle. In terms of biological role, necessary for the splicing of pre-mRNA. Probably active at the 3' splice sites. This chain is Splicing factor U2af small subunit B (U2AF35B), found in Arabidopsis thaliana (Mouse-ear cress).